The sequence spans 107 residues: SH3 domain-binding glutamic acid-rich-like protein 2 (107 aa).

The short motif at 61 to 67 is the SH3-binding element; the sequence is QGNPLPP.

Belongs to the SH3BGR family.

Its subcellular location is the nucleus. This is SH3 domain-binding glutamic acid-rich-like protein 2 (Sh3bgrl2) from Mus musculus (Mouse).